The following is a 268-amino-acid chain: uncharacterized protein (268 aa).

This is an uncharacterized protein from Methanocaldococcus jannaschii (strain ATCC 43067 / DSM 2661 / JAL-1 / JCM 10045 / NBRC 100440) (Methanococcus jannaschii).